Reading from the N-terminus, the 551-residue chain is Membrane protein insertase YidC (551 aa).

The chain crosses the membrane as a helical span at residues 6–26 (YFLWGALFISGYLLFLQWSQD). The span at 34–50 (SVAQSTQSQSETNSQMS) shows a compositional bias: low complexity. The tract at residues 34 to 68 (SVAQSTQSQSETNSQMSDDLPMATQSTTEANAEIP) is disordered. The span at 56–68 (ATQSTTEANAEIP) shows a compositional bias: polar residues. 5 helical membrane-spanning segments follow: residues 340–360 (TVDYGWLWWLAKPLFWLLTLI), 363–383 (FVINWGIAIILIVVCVKAIFF), 433–453 (LGGCLPILVQMPVFLSLYWVL), 464–484 (FFLWIHDLSVMDPYFILPILM), and 509–529 (IMPVAFSIFFLWFPAGLVLYW).

The protein belongs to the OXA1/ALB3/YidC family. Type 1 subfamily. In terms of assembly, interacts with the Sec translocase complex via SecD. Specifically interacts with transmembrane segments of nascent integral membrane proteins during membrane integration.

It is found in the cell inner membrane. Functionally, required for the insertion and/or proper folding and/or complex formation of integral membrane proteins into the membrane. Involved in integration of membrane proteins that insert both dependently and independently of the Sec translocase complex, as well as at least some lipoproteins. Aids folding of multispanning membrane proteins. This is Membrane protein insertase YidC from Marinomonas sp. (strain MWYL1).